The chain runs to 673 residues: DNA ligase (673 aa).

Residues 33–37 (DSVYD), 82–83 (SL), and E117 contribute to the NAD(+) site. The active-site N6-AMP-lysine intermediate is the K119. Positions 140, 177, 295, and 319 each coordinate NAD(+). Residues C413, C416, C431, and C436 each contribute to the Zn(2+) site. Residues 595–673 (AVSQVLAGKK…EAELLALDPK (79 aa)) enclose the BRCT domain.

The protein belongs to the NAD-dependent DNA ligase family. LigA subfamily. Requires Mg(2+) as cofactor. It depends on Mn(2+) as a cofactor.

The catalysed reaction is NAD(+) + (deoxyribonucleotide)n-3'-hydroxyl + 5'-phospho-(deoxyribonucleotide)m = (deoxyribonucleotide)n+m + AMP + beta-nicotinamide D-nucleotide.. Its function is as follows. DNA ligase that catalyzes the formation of phosphodiester linkages between 5'-phosphoryl and 3'-hydroxyl groups in double-stranded DNA using NAD as a coenzyme and as the energy source for the reaction. It is essential for DNA replication and repair of damaged DNA. The chain is DNA ligase from Synechococcus sp. (strain JA-3-3Ab) (Cyanobacteria bacterium Yellowstone A-Prime).